The chain runs to 1394 residues: DNA-directed RNA polymerase subunit beta'' (1394 aa).

Residues C224, C295, C302, and C305 each coordinate Zn(2+).

The protein belongs to the RNA polymerase beta' chain family. RpoC2 subfamily. As to quaternary structure, in plastids the minimal PEP RNA polymerase catalytic core is composed of four subunits: alpha, beta, beta', and beta''. When a (nuclear-encoded) sigma factor is associated with the core the holoenzyme is formed, which can initiate transcription. Requires Zn(2+) as cofactor.

Its subcellular location is the plastid. The protein resides in the chloroplast. The catalysed reaction is RNA(n) + a ribonucleoside 5'-triphosphate = RNA(n+1) + diphosphate. Its function is as follows. DNA-dependent RNA polymerase catalyzes the transcription of DNA into RNA using the four ribonucleoside triphosphates as substrates. The polypeptide is DNA-directed RNA polymerase subunit beta'' (Vitis vinifera (Grape)).